The sequence spans 498 residues: MGKVAVAFAAVAVVAACSVAAVMVGRRMKSRRKWRTVVEILKELEDDCDTPVGRLRQVVDAMAVEMHAGLASEGGSKLKMLLTFVDDLPTGREKGTYYALHLGGTYFRILRVLLGDQRSYLDVQDVERHPIPSHLMNSTSEVLFNFLAFSLERFIEKEENGSDSQGVRRELAFTFSFPVKHTSISSGVLIKWTKGFEISEMVGQDIAECLQGALNRRGLDMHVAALVNDTVGALSLGYYHDPDTVVAVVFGTGSNACYLERTDAIIKCQGLLTTSGSMVVNMEWGNFWSSHLPRTSYDIDLDAESSNANDMGFEKMISGMYLGDIVRRVILRMSEDSDIFGPISPVLSEPYVLRTNSVSAIHEDDTPELQEVARILKDIGVSDVPLKVRKLVVKICDVVTRRAGRLAAAGIAGILKKIGRDGSGGITSGRSRSEIQMQKRTVVAVEGGLYMNYTMFREYMEEALVEILGEEVSQYVVVKAMEDGSSIGSALLVASLQS.

A helical membrane pass occupies residues 4-24; that stretch reads VAVAFAAVAVVAACSVAAVMV. The region spanning 35-494 is the Hexokinase domain; the sequence is RTVVEILKEL…SSIGSALLVA (460 aa). Positions 90–227 are hexokinase small subdomain; it reads TGREKGTYYA…GLDMHVAALV (138 aa). Residues Gly104 and Thr105 each contribute to the ADP site. Thr193, Lys194, Asn228, and Asp229 together coordinate D-glucose. Positions 228 to 483 are hexokinase large subdomain; it reads NDTVGALSLG…QYVVVKAMED (256 aa). Thr252 is an ADP binding site. D-glucose-binding residues include Asn255, Glu283, and Glu314. Gly448 serves as a coordination point for ADP.

Belongs to the hexokinase family. In terms of tissue distribution, expressed in roots, emerging lateral roots, vascular tissues of cotyledons, roots and leaves, root and shoot meristems, anther filaments and funiculi of mature seeds.

Its subcellular location is the mitochondrion outer membrane. It carries out the reaction a D-hexose + ATP = a D-hexose 6-phosphate + ADP + H(+). The enzyme catalyses D-fructose + ATP = D-fructose 6-phosphate + ADP + H(+). The catalysed reaction is D-glucose + ATP = D-glucose 6-phosphate + ADP + H(+). The protein operates within carbohydrate metabolism; hexose metabolism. Its pathway is carbohydrate degradation; glycolysis; D-glyceraldehyde 3-phosphate and glycerone phosphate from D-glucose: step 1/4. In terms of biological role, fructose and glucose phosphorylating enzyme. May be involved in the phosphorylation of glucose during the export from mitochondrion to cytosol. Plays a role in plant growth and development, perhaps by mediating cross-talk between glucose and hormone response pathways. Involved in root hair cell development by mediating certain aspects of cross talk between glucose and ethylene response pathways. The sequence is that of Hexokinase-3 from Arabidopsis thaliana (Mouse-ear cress).